The primary structure comprises 306 residues: Mitochondrial uncoupling protein 1 (306 aa).

3 Solcar repeats span residues 9–102 (LSLP…VKNL), 112–203 (VPLS…VKET), and 212–296 (DNVV…AKKY). Helical transmembrane passes span 15 to 35 (FACSAFAACVGEVCTIPLDTA), 71 to 91 (LRSLWKGVVPGLHRQCLFGGL), 118 to 138 (ILAGLTTGALGIMVANPTDLV), 177 to 197 (TGLGPNVARNAIINAAELASY), 218 to 238 (ILSGLGAGFFAVCIGSPVDVV), and 269 to 289 (YKGFIPNFGRLGSWNVIMFLT).

Belongs to the mitochondrial carrier (TC 2.A.29) family. As to expression, widely expressed.

It is found in the mitochondrion inner membrane. Its function is as follows. PUMPS are mitochondrial transporter proteins that create proton leaks across the inner mitochondrial membrane, thus uncoupling oxidative phosphorylation. This leads to a decrease in the efficiency of oxidative phosphorylation and an increase in heat production. Is involved in protecting plant cells against oxidative stress damage and maintaining the redox balance of the mitochondrial electron transport chain to facilitate photosynthetic metabolism. May play a regulatory role during photorespiration. This chain is Mitochondrial uncoupling protein 1 (PUMP1), found in Arabidopsis thaliana (Mouse-ear cress).